Consider the following 172-residue polypeptide: 3-phenylpropionate/cinnamic acid dioxygenase subunit beta (172 aa).

Belongs to the bacterial ring-hydroxylating dioxygenase beta subunit family. As to quaternary structure, this dioxygenase system consists of four proteins: the two subunits of the hydroxylase component (HcaE and HcaF), a ferredoxin (HcaC) and a ferredoxin reductase (HcaD).

The enzyme catalyses 3-phenylpropanoate + NADH + O2 + H(+) = 3-(cis-5,6-dihydroxycyclohexa-1,3-dien-1-yl)propanoate + NAD(+). It catalyses the reaction (E)-cinnamate + NADH + O2 + H(+) = (2E)-3-(cis-5,6-dihydroxycyclohexa-1,3-dien-1-yl)prop-2-enoate + NAD(+). Its pathway is aromatic compound metabolism; 3-phenylpropanoate degradation. Functionally, part of the multicomponent 3-phenylpropionate dioxygenase. Converts 3-phenylpropionic acid (PP) and cinnamic acid (CI) into 3-phenylpropionate-dihydrodiol (PP-dihydrodiol) and cinnamic acid-dihydrodiol (CI-dihydrodiol), respectively. The sequence is that of 3-phenylpropionate/cinnamic acid dioxygenase subunit beta from Escherichia coli O7:K1 (strain IAI39 / ExPEC).